The following is an 877-amino-acid chain: DNA (cytosine-5)-methyltransferase 3A (877 aa).

Disordered stretches follow at residues 1-154 (MVES…MQRH), 194-250 (EETP…PEYE), and 412-431 (AYAPPPPAKKPRKSTTEKPK). 2 stretches are compositionally biased toward basic and acidic residues: residues 107-133 (KLLEATEKSKEEKEENNFDSLKMEGSR) and 195-206 (ETPRAEPQKEEE). Positions 210 to 225 (PASQQPTDPASPNVAT) are enriched in polar residues. A PWWP domain is found at 226 to 284 (TPEPVVADAVDKNTSKSADDEPEYEDGRGLGIGELVWGKLRGFSWWPGRIVSWWMTGRS). Residues 234–244 (AVDKNTSKSAD) show a composition bias toward basic and acidic residues. In terms of domain architecture, ADD spans 447 to 579 (EVRQKCRNIE…LQMFFANNHD (133 aa)). A GATA-type; atypical zinc finger spans residues 458-488 (ICISCGSLNVTLEHPLFIGGMCQNCKNCFLE). The segment at 499-555 (QSYCTICCGGREVLMCGNNNCCRCFCVECVDLLVGPGAAQAAIKEDPWNCYMCGHKG) adopts a PHD-type; atypical zinc-finger fold. Residues 599–877 (IRVLSLFDGI…APLKEYFACV (279 aa)) enclose the SAM-dependent MTase C5-type domain. S-adenosyl-L-methionine contacts are provided by residues 606 to 610 (DGIAT), Glu629, and 651 to 653 (DVR). The active site involves Cys675. An S-adenosyl-L-methionine-binding site is contributed by 856–858 (RSW).

It belongs to the class I-like SAM-binding methyltransferase superfamily. C5-methyltransferase family.

The protein localises to the nucleus. It is found in the chromosome. It localises to the cytoplasm. It carries out the reaction a 2'-deoxycytidine in DNA + S-adenosyl-L-methionine = a 5-methyl-2'-deoxycytidine in DNA + S-adenosyl-L-homocysteine + H(+). It catalyses the reaction L-cysteinyl-[protein] + S-adenosyl-L-methionine = S-methyl-L-cysteinyl-[protein] + S-adenosyl-L-homocysteine + H(+). Required for genome-wide de novo methylation and is essential for development. DNA methylation is coordinated with methylation of histones. It modifies DNA in a non-processive manner and also methylates non-CpG sites. Acts as a transcriptional corepressor for ZNF238. Can actively repress transcription through the recruitment of HDAC activity. Also has weak auto-methylation activity on some Cys residue in absence of DNA. The chain is DNA (cytosine-5)-methyltransferase 3A (DNMT3A) from Gallus gallus (Chicken).